We begin with the raw amino-acid sequence, 482 residues long: Lipoamide acyltransferase component of branched-chain alpha-keto acid dehydrogenase complex, mitochondrial (482 aa).

The N-terminal 61 residues, 1–61, are a transit peptide targeting the mitochondrion; that stretch reads MAAVRMLRTW…HFLKTTAALR (61 aa). A Lipoyl-binding domain is found at 64 to 139; sequence VVQFKLSDIG…YVGKPLVDIE (76 aa). Lys105 bears the N6-lipoyllysine mark. Residue Lys133 is modified to N6-succinyllysine. A critical for association with PPM1K region spans residues 145–160; it reads DSEEDVVETPAVSHDE. A disordered region spans residues 147 to 168; that stretch reads EEDVVETPAVSHDEHTHQEIKG. Residues 157 to 168 are compositionally biased toward basic and acidic residues; it reads SHDEHTHQEIKG. The Peripheral subunit-binding (PSBD) domain maps to 172–209; the sequence is LATPAVRRLAMENNIKLSEVVGSGKDGRILKEDILNYL. An N6-acetyllysine; alternate modification is found at Lys196. N6-succinyllysine; alternate is present on Lys196. N6-acetyllysine is present on Lys202. The residue at position 220 (Ser220) is a Phosphoserine. An N6-acetyllysine mark is found at Lys243 and Lys250. Lys261 carries the N6-succinyllysine modification. The residue at position 289 (Lys289) is an N6-acetyllysine; alternate. The residue at position 289 (Lys289) is an N6-succinyllysine; alternate. A CoA-binding site is contributed by Arg291. N6-acetyllysine is present on residues Lys295 and Lys304. Residues Ser306, Asp349, Gln378, Ser399, Asn400, Ser403, Gly424, and Ile426 each coordinate CoA. N6-acetyllysine is present on Lys435. Lys440 carries the N6-acetyllysine; alternate modification. Position 440 is an N6-succinyllysine; alternate (Lys440). Residues His452 and Asp456 contribute to the active site.

This sequence belongs to the 2-oxoacid dehydrogenase family. Forms a 24-polypeptide structural core with octahedral symmetry that represents the E2 component of the branched-chain alpha-ketoacid dehydrogenase (BCKDH) complex. The BCKDH complex is composed of three major building blocks E1, E2 and E3. It is organized around E2, a 24-meric cubic core composed of DBT, to which are associated 6 to 12 copies of E1, and approximately 6 copies of the dehydrogenase E3, a DLD dimer. Interacts with PPM1K with a 24:1 stoichiometry; the N-terminal region (residues 49-61) of PPM1K and C-terminal linker of the lipoyl domain of DBT/E2 (residues 145-160) are critical for this interaction whereas the lipoyl prosthetic group is dispensable. This interaction requires colocalization in mitochondria. PPM1K competes with BCKDK for binding to DBT; this interaction is modulated by branched-chain alpha-keto acids (BCKAs). At steady state, BCKDH holoenzyme preferentially binds BCKDK and BCKDHA is phosphorylated. In response to high levels of BCKAs, BCKDK is replaced by PPM1K leading to BCKDHA dephosphorylation. (R)-lipoate serves as cofactor.

It localises to the mitochondrion matrix. It catalyses the reaction N(6)-[(R)-dihydrolipoyl]-L-lysyl-[protein] + 2-methylpropanoyl-CoA = N(6)-[(R)-S(8)-2-methylpropanoyldihydrolipoyl]-L-lysyl-[protein] + CoA. The branched-chain alpha-keto dehydrogenase complex catalyzes the overall conversion of alpha-keto acids to acyl-CoA and CO(2). It contains multiple copies of three enzymatic components: branched-chain alpha-keto acid decarboxylase (E1), lipoamide acyltransferase (E2) and lipoamide dehydrogenase (E3). Within this complex, the catalytic function of this enzyme is to accept, and to transfer to coenzyme A, acyl groups that are generated by the branched-chain alpha-keto acid decarboxylase component. This is Lipoamide acyltransferase component of branched-chain alpha-keto acid dehydrogenase complex, mitochondrial from Homo sapiens (Human).